We begin with the raw amino-acid sequence, 144 residues long: Cathelicidin-4 (144 aa).

The first 29 residues, 1 to 29, serve as a signal peptide directing secretion; the sequence is MQTQRASLSLGRWSLWLLLLGLVVPSASA. Positions 30-130 are excised as a propeptide; the sequence is QALSYREAVL…DLNCNELQSV (101 aa). Disulfide bonds link Cys-85–Cys-96 and Cys-107–Cys-124. Arg-143 is subject to Arginine amide.

This sequence belongs to the cathelicidin family. Elastase might be responsible for its maturation. Large granules of neutrophils.

Its subcellular location is the secreted. Potent microbicidal activity; active against S.aureus and E.coli. The protein is Cathelicidin-4 (CATHL4) of Bos taurus (Bovine).